The chain runs to 62 residues: Metallothionein-like protein 3A (62 aa).

This sequence belongs to the metallothionein superfamily. Type 15 family.

Functionally, metallothioneins have a high content of cysteine residues that bind various heavy metals. The polypeptide is Metallothionein-like protein 3A (MT3A) (Oryza sativa subsp. indica (Rice)).